The sequence spans 405 residues: Cytoplasmic tRNA 2-thiolation protein 2 (405 aa).

Belongs to the CTU2/NCS2 family.

It is found in the cytoplasm. It participates in tRNA modification; 5-methoxycarbonylmethyl-2-thiouridine-tRNA biosynthesis. Its function is as follows. Plays a central role in 2-thiolation of mcm(5)S(2)U at tRNA wobble positions of tRNA(Lys), tRNA(Glu) and tRNA(Gln). May act by forming a heterodimer with NCS6/CTU1 that ligates sulfur from thiocarboxylated URM1 onto the uridine of tRNAs at wobble position. The polypeptide is Cytoplasmic tRNA 2-thiolation protein 2 (Drosophila melanogaster (Fruit fly)).